Here is a 192-residue protein sequence, read N- to C-terminus: Probable nicotinate-nucleotide adenylyltransferase (192 aa).

The protein belongs to the NadD family.

The enzyme catalyses nicotinate beta-D-ribonucleotide + ATP + H(+) = deamido-NAD(+) + diphosphate. Its pathway is cofactor biosynthesis; NAD(+) biosynthesis; deamido-NAD(+) from nicotinate D-ribonucleotide: step 1/1. Functionally, catalyzes the reversible adenylation of nicotinate mononucleotide (NaMN) to nicotinic acid adenine dinucleotide (NaAD). In Cereibacter sphaeroides (strain ATCC 17029 / ATH 2.4.9) (Rhodobacter sphaeroides), this protein is Probable nicotinate-nucleotide adenylyltransferase.